The primary structure comprises 1013 residues: Ephrin type-B receptor 6 (1013 aa).

Positions 1 to 31 (MASENTAGSGSRVAGMVYSLWLLVLGPSVLA) are cleaved as a signal peptide. Residues 32–590 (LEEVLLDTTG…LPEKLSLVIG (559 aa)) are Extracellular-facing. One can recognise an Eph LBD domain in the interval 33 to 231 (EEVLLDTTGE…FSYTCPSVLR (199 aa)). 2 Fibronectin type-III domains span residues 363-478 (PPSA…TSHE) and 479-574 (VPSA…TLPQ). Asn-472 is a glycosylation site (N-linked (GlcNAc...) asparagine). A helical membrane pass occupies residues 591–611 (SILGALAFLLLAAITVLAVIF). Residues 612–1013 (QRKRRGTGYT…HLRQPGSVEV (402 aa)) are Cytoplasmic-facing. The Protein kinase domain occupies 662–911 (IKIEEVIGAG…QLVAAFDKMI (250 aa)). 668–676 (IGAGSFGEV) serves as a coordination point for ATP. One can recognise an SAM domain in the interval 940–1004 (PCLDSPQAWL…LHNIQLLQQH (65 aa)). The short motif at 1011-1013 (VEV) is the PDZ-binding element.

The protein belongs to the protein kinase superfamily. Tyr protein kinase family. Ephrin receptor subfamily. In terms of assembly, interacts with CBL and EPHB1. Interacts with FYN; this interaction takes place in a ligand-independent manner. Post-translationally, ligand-binding increases phosphorylation on tyrosine residues. Phosphorylation on tyrosine residues is mediated by transphosphorylation by the catalytically active EPHB1 in a ligand-independent manner. Tyrosine phosphorylation of the receptor may act as a switch on the functional transition from cell adhesion/attraction to de-adhesion/repulsion.

Its subcellular location is the membrane. Kinase-defective receptor for members of the ephrin-B family. Binds to ephrin-B1 and ephrin-B2. Modulates cell adhesion and migration by exerting both positive and negative effects upon stimulation with ephrin-B2. Inhibits JNK activation, T-cell receptor-induced IL-2 secretion and CD25 expression upon stimulation with ephrin-B2. This Rattus norvegicus (Rat) protein is Ephrin type-B receptor 6 (Ephb6).